The chain runs to 525 residues: Chromosomal replication initiator protein DnaA (525 aa).

The interval 1 to 71 (MNDFWQHCSA…SDLAREFWNT (71 aa)) is domain I, interacts with DnaA modulators. Positions 71–188 (TPIEVQFVLD…GEADSMYERS (118 aa)) are domain II. The segment at 160–182 (AAAGRRTWRPGPGAAPANGGEAD) is disordered. Low complexity predominate over residues 169 to 181 (PGPGAAPANGGEA). The domain III, AAA+ region stretch occupies residues 189 to 405 (KLNPVLTFDN…GALRKILAYS (217 aa)). 4 residues coordinate ATP: G233, G235, K236, and T237. Residues 406–525 (KFHGREISIE…LHVLEQTLKG (120 aa)) are domain IV, binds dsDNA.

Belongs to the DnaA family. In terms of assembly, oligomerizes as a right-handed, spiral filament on DNA at oriC.

It localises to the cytoplasm. Its function is as follows. Plays an essential role in the initiation and regulation of chromosomal replication. ATP-DnaA binds to the origin of replication (oriC) to initiate formation of the DNA replication initiation complex once per cell cycle. Binds the DnaA box (a 9 base pair repeat at the origin) and separates the double-stranded (ds)DNA. Forms a right-handed helical filament on oriC DNA; dsDNA binds to the exterior of the filament while single-stranded (ss)DNA is stabiized in the filament's interior. The ATP-DnaA-oriC complex binds and stabilizes one strand of the AT-rich DNA unwinding element (DUE), permitting loading of DNA polymerase. After initiation quickly degrades to an ADP-DnaA complex that is not apt for DNA replication. Binds acidic phospholipids. The polypeptide is Chromosomal replication initiator protein DnaA (Burkholderia orbicola (strain MC0-3)).